The sequence spans 221 residues: Agamous-like MADS-box protein AGL14 (221 aa).

One can recognise an MADS-box domain in the interval 3 to 57 (RGKTEMKRIENATSRQVTFSKRRNGLLKKAFELSVLCDAEVALIIFSPRGKLYEF). A K-box domain is found at 87-177 (SQQSKDETYG…MEKCEMQGRG (91 aa)).

In terms of assembly, interacts with AGL16. Preferentially expressed in roots. Expressed in lateral root cap, root epidermis, root endodermis, columella of the root meristematic region, the vascular cylinder in differentiated zones of the primary root and in emerged lateral root primordia. Expressed in pollen.

The protein localises to the nucleus. In terms of biological role, transcriptional activator that regulates root development by controlling meristem size and patterning of the root apical meristem. Regulates auxin transport and gradients in the root meristematic cells via direct regulation of the auxin efflux carrier PIN1 and PIN4 gene expression. Binds specifically to the CArG-box DNA sequences in the promoter regions of PIN1 and PIN4 genes. Involved in the regulation of shoot apical meristem (SAM) cell identities and transitions. Promotes flowering transition and participates in flower meristem maintenance and determinacy. Positively regulates TFL1 and WUS expression. Binds directly to the TFL1 regulatory sequences. The protein is Agamous-like MADS-box protein AGL14 of Arabidopsis thaliana (Mouse-ear cress).